A 542-amino-acid polypeptide reads, in one-letter code: Chaperonin GroEL (542 aa).

Residues 29 to 32 (TLGP), 86 to 90 (DGTTT), Gly-413, 476 to 478 (NAA), and Asp-492 contribute to the ATP site.

The protein belongs to the chaperonin (HSP60) family. Forms a cylinder of 14 subunits composed of two heptameric rings stacked back-to-back. Interacts with the co-chaperonin GroES.

The protein resides in the cytoplasm. It catalyses the reaction ATP + H2O + a folded polypeptide = ADP + phosphate + an unfolded polypeptide.. Together with its co-chaperonin GroES, plays an essential role in assisting protein folding. The GroEL-GroES system forms a nano-cage that allows encapsulation of the non-native substrate proteins and provides a physical environment optimized to promote and accelerate protein folding. This chain is Chaperonin GroEL, found in Lactococcus lactis subsp. cremoris (strain MG1363).